Here is a 430-residue protein sequence, read N- to C-terminus: tRNA(Ile)-lysidine synthase (430 aa).

Residue 24 to 29 (SGGLDS) participates in ATP binding.

It belongs to the tRNA(Ile)-lysidine synthase family.

The protein localises to the cytoplasm. The catalysed reaction is cytidine(34) in tRNA(Ile2) + L-lysine + ATP = lysidine(34) in tRNA(Ile2) + AMP + diphosphate + H(+). Its function is as follows. Ligates lysine onto the cytidine present at position 34 of the AUA codon-specific tRNA(Ile) that contains the anticodon CAU, in an ATP-dependent manner. Cytidine is converted to lysidine, thus changing the amino acid specificity of the tRNA from methionine to isoleucine. This Haemophilus influenzae (strain ATCC 51907 / DSM 11121 / KW20 / Rd) protein is tRNA(Ile)-lysidine synthase.